Reading from the N-terminus, the 430-residue chain is Glutamine synthetase, chloroplastic/mitochondrial (430 aa).

The N-terminal 45 residues, 1-45 (MAQILAASPTCQMRVPKHSSVIASSSKLWSSVVLKQKKQSNNKVR), are a transit peptide targeting the chloroplast and mitochondrion. Positions 77–157 (IIAEYIWIGG…VICDTWTPAG (81 aa)) constitute a GS beta-grasp domain. Positions 97-122 (TIEKPVEDPSELPKWNYDGSSTGQAP) are disordered. The residue at position 106 (serine 106) is a Phosphoserine. Residues 161–430 (PTNKRAKAAE…LAAQKLSLNV (270 aa)) enclose the GS catalytic domain.

This sequence belongs to the glutamine synthetase family. As to quaternary structure, homooctamer. In terms of tissue distribution, expressed in mesophyll and epidermal cells of leaves.

The protein resides in the plastid. The protein localises to the chloroplast. It is found in the mitochondrion. It catalyses the reaction L-glutamate + NH4(+) + ATP = L-glutamine + ADP + phosphate + H(+). Functionally, the light-modulated chloroplast/mitochondrial enzyme, encoded by a nuclear gene and expressed primarily in leaves, is responsible for the reassimilation of the ammonia generated by photorespiration. The polypeptide is Glutamine synthetase, chloroplastic/mitochondrial (GLN2) (Arabidopsis thaliana (Mouse-ear cress)).